The sequence spans 118 residues: Protein TusC (118 aa).

Belongs to the DsrF/TusC family. Heterohexamer, formed by a dimer of trimers. The hexameric TusBCD complex contains 2 copies each of TusB, TusC and TusD. The TusBCD complex interacts with TusE.

The protein resides in the cytoplasm. Functionally, part of a sulfur-relay system required for 2-thiolation of 5-methylaminomethyl-2-thiouridine (mnm(5)s(2)U) at tRNA wobble positions. This chain is Protein TusC, found in Salmonella agona (strain SL483).